The following is a 216-amino-acid chain: 3-keto-L-gulonate-6-phosphate decarboxylase UlaD (216 aa).

Asp11 provides a ligand contact to substrate. Residues Glu33 and Asp62 each coordinate Mg(2+). A substrate-binding site is contributed by Arg192.

This sequence belongs to the HPS/KGPDC family. KGPDC subfamily. Homodimer. Requires Mg(2+) as cofactor.

The enzyme catalyses 3-dehydro-L-gulonate 6-phosphate + H(+) = L-xylulose 5-phosphate + CO2. The protein operates within cofactor degradation; L-ascorbate degradation; D-xylulose 5-phosphate from L-ascorbate: step 2/4. Catalyzes the decarboxylation of 3-keto-L-gulonate-6-P into L-xylulose-5-P. Is involved in the anaerobic L-ascorbate utilization. The sequence is that of 3-keto-L-gulonate-6-phosphate decarboxylase UlaD from Escherichia coli O17:K52:H18 (strain UMN026 / ExPEC).